The primary structure comprises 282 residues: 4-diphosphocytidyl-2-C-methyl-D-erythritol kinase (282 aa).

K12 is an active-site residue. Position 95 to 105 (P95 to S105) interacts with ATP. D137 is a catalytic residue.

This sequence belongs to the GHMP kinase family. IspE subfamily.

It carries out the reaction 4-CDP-2-C-methyl-D-erythritol + ATP = 4-CDP-2-C-methyl-D-erythritol 2-phosphate + ADP + H(+). It participates in isoprenoid biosynthesis; isopentenyl diphosphate biosynthesis via DXP pathway; isopentenyl diphosphate from 1-deoxy-D-xylulose 5-phosphate: step 3/6. Catalyzes the phosphorylation of the position 2 hydroxy group of 4-diphosphocytidyl-2C-methyl-D-erythritol. The chain is 4-diphosphocytidyl-2-C-methyl-D-erythritol kinase from Pseudomonas paraeruginosa (strain DSM 24068 / PA7) (Pseudomonas aeruginosa (strain PA7)).